The following is a 440-amino-acid chain: Microtubule-associated tumor suppressor 1 homolog A (440 aa).

The tract at residues 44–67 (KSRTNSKNPQPPTNGQPDLVPPES) is disordered. The stretch at 69-401 (SRNVEYYKAQ…RLSMENEELL (333 aa)) forms a coiled coil. The interval 407–440 (GDLNSPRKISPSPSLNLQSPRTSGMFSSPPVSPR) is disordered. Polar residues predominate over residues 417 to 432 (PSPSLNLQSPRTSGMF).

The protein belongs to the MTUS1 family. Homodimer.

It localises to the mitochondrion. The protein resides in the golgi apparatus. Its subcellular location is the cell membrane. The protein localises to the nucleus. In terms of biological role, may inhibit cell proliferation. The protein is Microtubule-associated tumor suppressor 1 homolog A (mtus1a) of Danio rerio (Zebrafish).